A 621-amino-acid polypeptide reads, in one-letter code: UvrABC system protein C (621 aa).

Positions T20 to V98 constitute a GIY-YIG domain. Residues D207–M242 form the UVR domain.

This sequence belongs to the UvrC family. As to quaternary structure, interacts with UvrB in an incision complex.

The protein resides in the cytoplasm. Its function is as follows. The UvrABC repair system catalyzes the recognition and processing of DNA lesions. UvrC both incises the 5' and 3' sides of the lesion. The N-terminal half is responsible for the 3' incision and the C-terminal half is responsible for the 5' incision. This Xylella fastidiosa (strain M23) protein is UvrABC system protein C.